A 136-amino-acid polypeptide reads, in one-letter code: 14 kDa fusion protein (136 aa).

The disordered stretch occupies residues 22–50 (EAWTTSRSSTGSANPSASRKPARYPRIHA). Polar residues predominate over residues 24 to 38 (WTTSRSSTGSANPSA). N-linked (GlcNAc...) asparagine; by host glycosylation occurs at asparagine 86.

This sequence belongs to the poxviruses fusion protein family. In terms of assembly, homotrimer, covalently linked.

It is found in the virion membrane. This protein appears to play an important role in virus penetration at the level of cell fusion. The N-terminal proximal region is essential for fusion ability. Essential in fusing the outermost of the two Golgi-derived membranes enveloping the virus with the plasma membrane, and in its subsequent release extracellularly. In Vaccinia virus (strain WR 65-16) (VACV), this protein is 14 kDa fusion protein.